The primary structure comprises 254 residues: Small ribosomal subunit protein uS2 (254 aa).

Belongs to the universal ribosomal protein uS2 family.

This Borrelia duttonii (strain Ly) protein is Small ribosomal subunit protein uS2.